A 23-amino-acid chain; its full sequence is Basic phospholipase A2 CB1 (23 aa).

In terms of assembly, heterodimer of an acidic subunit and a basic chain. The acidic subunit is non-toxic, without enzymatic activity and comprises 3 peptides that are cross-linked by 7 disulfide bridges. The basic subunit is toxic, has phospholipase A2 activity and is composed of a single chain. Ca(2+) is required as a cofactor. In terms of processing, contains 7 disulfide bonds. As to expression, expressed by the venom gland.

The protein localises to the secreted. It carries out the reaction a 1,2-diacyl-sn-glycero-3-phosphocholine + H2O = a 1-acyl-sn-glycero-3-phosphocholine + a fatty acid + H(+). Its function is as follows. Snake venom phospholipase A2 (PLA2) that shows presynaptic neurotoxicity. PLA2 catalyzes the calcium-dependent hydrolysis of the 2-acyl groups in 3-sn-phosphoglycerides. The polypeptide is Basic phospholipase A2 CB1 (Crotalus basiliscus (Mexican west-coast rattlesnake)).